We begin with the raw amino-acid sequence, 91 residues long: Sec-independent protein translocase protein TatA (91 aa).

A helical membrane pass occupies residues 1–21 (MGAMSPWHWAIVALVVIILFG). The segment at 44-91 (KEMQNDNSTPAPTAQQSAPAELPVADTTTAPVTPPAPVQPQHTEPKSA) is disordered. Low complexity predominate over residues 51-74 (STPAPTAQQSAPAELPVADTTTAP).

It belongs to the TatA/E family. In terms of assembly, the Tat system comprises two distinct complexes: a TatABC complex, containing multiple copies of TatA, TatB and TatC subunits, and a separate TatA complex, containing only TatA subunits. Substrates initially bind to the TatABC complex, which probably triggers association of the separate TatA complex to form the active translocon.

The protein resides in the cell membrane. Functionally, part of the twin-arginine translocation (Tat) system that transports large folded proteins containing a characteristic twin-arginine motif in their signal peptide across membranes. TatA could form the protein-conducting channel of the Tat system. The polypeptide is Sec-independent protein translocase protein TatA (Rhodococcus jostii (strain RHA1)).